The sequence spans 512 residues: ATP synthase subunit alpha (512 aa).

ATP is bound at residue 169 to 176; sequence GDRQTGKT.

This sequence belongs to the ATPase alpha/beta chains family. In terms of assembly, F-type ATPases have 2 components, CF(1) - the catalytic core - and CF(0) - the membrane proton channel. CF(1) has five subunits: alpha(3), beta(3), gamma(1), delta(1), epsilon(1). CF(0) has three main subunits: a(1), b(2) and c(9-12). The alpha and beta chains form an alternating ring which encloses part of the gamma chain. CF(1) is attached to CF(0) by a central stalk formed by the gamma and epsilon chains, while a peripheral stalk is formed by the delta and b chains.

It is found in the cell inner membrane. It catalyses the reaction ATP + H2O + 4 H(+)(in) = ADP + phosphate + 5 H(+)(out). Produces ATP from ADP in the presence of a proton gradient across the membrane. The alpha chain is a regulatory subunit. In Orientia tsutsugamushi (strain Boryong) (Rickettsia tsutsugamushi), this protein is ATP synthase subunit alpha.